The following is a 561-amino-acid chain: MTFRDILSVTFEGPRSSSSTGGSGAGGGAGTVGPEGGAVGGVPGATGGGAVVGTGSGEDNQSSTGEPGAAASGEVNGSAAVGGLVVSAQGVGVGVFLAAFILTAVAGNLLVILSVACNRHLQTVTNYFIVNLAVADLLLSAAVLPFSATMEVLGFWAFGRTFCDVWAAVDVLCCTASILSLCTISVDRYVGVRHSLKYPAIMTERKAAAILALLWAVALVVSVGPLLGWKEPVPPDERFCGITEEVGYAIFSSVCSFYLPMAVIVVMYCRVYVVARSTTRSLEAGIKREPGKASEVVLRIHCRGAATSAKGYPGTQSSKGHTLRSSLSVRLLKFSREKKAAKTLAIVVGVFVLCWFPFFFVLPLGSLFPQLKPSEGVFKVIFWLGYFNSCVNPLIYPCSSREFKRAFLRLLRCQCRRRRRRLWAVYGHHWRASTGDARSDCAPSPRIAPPGAPLALTAHPGAGSADTPETQDSVSSSRKPASALREWRLLGPLQRPTTQLRAKVSSLSHKIRSGARRAETACALRSEVEAVSLNVPQDGAEAVICQAYEPGDYSNLRETDI.

The Extracellular portion of the chain corresponds to 1–90; that stretch reads MTFRDILSVT…VGGLVVSAQG (90 aa). A disordered region spans residues 10–71; it reads TFEGPRSSSS…SSTGEPGAAA (62 aa). Positions 21 to 56 are enriched in gly residues; sequence GGSGAGGGAGTVGPEGGAVGGVPGATGGGAVVGTGS. N60 and N76 each carry an N-linked (GlcNAc...) asparagine glycan. The helical transmembrane segment at 91-115 threads the bilayer; sequence VGVGVFLAAFILTAVAGNLLVILSV. Over 116-127 the chain is Cytoplasmic; it reads ACNRHLQTVTNY. A helical membrane pass occupies residues 128 to 153; sequence FIVNLAVADLLLSAAVLPFSATMEVL. The Extracellular portion of the chain corresponds to 154–163; the sequence is GFWAFGRTFC. Residues 164–186 traverse the membrane as a helical segment; the sequence is DVWAAVDVLCCTASILSLCTISV. Residues 187 to 207 lie on the Cytoplasmic side of the membrane; sequence DRYVGVRHSLKYPAIMTERKA. Residues 208-232 traverse the membrane as a helical segment; it reads AAILALLWAVALVVSVGPLLGWKEP. Over 233–245 the chain is Extracellular; that stretch reads VPPDERFCGITEE. A helical transmembrane segment spans residues 246-269; it reads VGYAIFSSVCSFYLPMAVIVVMYC. Topologically, residues 270–342 are cytoplasmic; the sequence is RVYVVARSTT…KFSREKKAAK (73 aa). Residues 343–367 form a helical membrane-spanning segment; that stretch reads TLAIVVGVFVLCWFPFFFVLPLGSL. The Extracellular segment spans residues 368-374; it reads FPQLKPS. A helical transmembrane segment spans residues 375–399; that stretch reads EGVFKVIFWLGYFNSCVNPLIYPCS. The Cytoplasmic portion of the chain corresponds to 400–561; sequence SREFKRAFLR…DYSNLRETDI (162 aa). A lipid anchor (S-palmitoyl cysteine) is attached at C413. A disordered region spans residues 452–481; the sequence is APLALTAHPGAGSADTPETQDSVSSSRKPA. Positions 467 to 479 are enriched in polar residues; that stretch reads TPETQDSVSSSRK.

Belongs to the G-protein coupled receptor 1 family. Adrenergic receptor subfamily. ADRA1D sub-subfamily. As to quaternary structure, interacts with FLNA (via filamin repeat 21); increases PKA-mediated phosphorylation of FLNA. Post-translationally, palmitoylated. Palmitoylation by ZDHHC21 may increase the expression of the receptor and regulate downstream signaling. In terms of tissue distribution, vas deferens, hippocampus, cerebral cortex, aorta, brain stem, heart and spleen.

It is found in the cell membrane. In terms of biological role, this alpha-adrenergic receptor mediates its effect through the influx of extracellular calcium. The chain is Alpha-1D adrenergic receptor (Adra1d) from Rattus norvegicus (Rat).